The sequence spans 285 residues: MSHAMDLLHVFILAVIQGLAELLPVSSSAHVILAEKLMGFDPSAPNMTFLLVMLHTGTMFAVIVYFWHSWKKTYFFDWQSFKQRAWYVLLATAITGVLGLLLQSLIKHVFFGGVSSFEIEHLFSNSKLMAAALAAAGILIILSSRLDRGQQGDIRLPSAMIIGAVQALCLPFRGFSRSGATISTGLFLGISRQKAEEFSFALAVVLTPAVIVKELVRLLHAQHATTGATHLALGSLLLPSIFGMVFSFLTGLLALKWLSAWLEHGRWYLFGIYCLAFSGVVLTLA.

8 helical membrane passes run 5–25 (MDLL…LLPV), 47–67 (MTFL…VYFW), 86–106 (WYVL…QSLI), 122–142 (LFSN…LIIL), 156–176 (LPSA…RGFS), 198–218 (FSFA…LVRL), 235–255 (SLLL…LLAL), and 265–285 (GRWY…LTLA).

Belongs to the UppP family.

It is found in the cell inner membrane. The enzyme catalyses di-trans,octa-cis-undecaprenyl diphosphate + H2O = di-trans,octa-cis-undecaprenyl phosphate + phosphate + H(+). Catalyzes the dephosphorylation of undecaprenyl diphosphate (UPP). Confers resistance to bacitracin. The polypeptide is Undecaprenyl-diphosphatase 2 (Acinetobacter baylyi (strain ATCC 33305 / BD413 / ADP1)).